A 344-amino-acid chain; its full sequence is tRNA N6-adenosine threonylcarbamoyltransferase (344 aa).

Histidine 116 and histidine 120 together coordinate Fe cation. Residues 138–142 (LVSGG), aspartate 171, glycine 184, aspartate 188, and asparagine 277 contribute to the substrate site. Aspartate 307 is a Fe cation binding site.

Belongs to the KAE1 / TsaD family. Fe(2+) serves as cofactor.

The protein localises to the cytoplasm. The enzyme catalyses L-threonylcarbamoyladenylate + adenosine(37) in tRNA = N(6)-L-threonylcarbamoyladenosine(37) in tRNA + AMP + H(+). In terms of biological role, required for the formation of a threonylcarbamoyl group on adenosine at position 37 (t(6)A37) in tRNAs that read codons beginning with adenine. Is involved in the transfer of the threonylcarbamoyl moiety of threonylcarbamoyl-AMP (TC-AMP) to the N6 group of A37, together with TsaE and TsaB. TsaD likely plays a direct catalytic role in this reaction. This is tRNA N6-adenosine threonylcarbamoyltransferase from Latilactobacillus sakei subsp. sakei (strain 23K) (Lactobacillus sakei subsp. sakei).